The sequence spans 162 residues: Caveolin-2 (162 aa).

The Cytoplasmic segment spans residues 1–86; the sequence is MGLETEKADV…FEISKYIIYK (86 aa). Tyrosine 19 carries the phosphotyrosine; by SRC modification. A phosphoserine mark is found at serine 20 and serine 23. Tyrosine 27 carries the post-translational modification Phosphotyrosine; by SRC. Residues 87–107 constitute an intramembrane region (helical); the sequence is FLTVFLAIPLAFAAGILFATL. At 108–162 the chain is on the cytoplasmic side; it reads SCLHIWITMPFVKTCLMVLPSVQTIWKSVTDVAIAPLCTSVGRSFSSVSLQLSHD.

This sequence belongs to the caveolin family. As to quaternary structure, monomer or homodimer. Interacts with CAV1; the interaction forms a stable heterooligomeric complex that is required for targeting to lipid rafts and for caveolae formation. Tyrosine phosphorylated forms do not form heterooligomers with the Tyr-19-phosphorylated form existing as a monomer or dimer, and the Tyr-27-form as a monomer only. Interacts (tyrosine phosphorylated form) with the SH2 domain-containing proteins, RASA1, NCK1 and SRC. Interacts (tyrosine phosphorylated form) with INSR, the interaction (Tyr-27-phosphorylated form) is increased on insulin stimulation. Interacts (Tyr-19 phosphorylated form) with MAPK1 (phosphorylated form); the interaction, promoted by insulin, leads to nuclear location and MAPK1 activation. Interacts with STAT3; the interaction is increased on insulin-induced tyrosine phosphorylation leading to STAT activation. In terms of processing, phosphorylated on serine and tyrosine residues. CAV1 promotes phosphorylation on Ser-23 which then targets the complex to the plasma membrane, lipid rafts and caveolae. Phosphorylation on both Tyr-19 and Tyr-27 is required for insulin-induced 'Ser-727' phosphorylation of STAT3 and its activation. Phosphorylation on Tyr-19 is required for insulin-induced phosphorylation of MAPK1 and DNA binding of STAT3. Tyrosine phosphorylation is induced by both EGF and insulin.

The protein localises to the nucleus. Its subcellular location is the cytoplasm. The protein resides in the golgi apparatus membrane. It localises to the cell membrane. It is found in the membrane. The protein localises to the caveola. May act as a scaffolding protein within caveolar membranes. Interacts directly with G-protein alpha subunits and can functionally regulate their activity. Acts as an accessory protein in conjunction with CAV1 in targeting to lipid rafts and driving caveolae formation. Positive regulator of cellular mitogenesis of the MAPK signaling pathway. Required for the insulin-stimulated nuclear translocation and activation of MAPK1 and STAT3, and the subsequent regulation of cell cycle progression. The protein is Caveolin-2 (CAV2) of Dasypus novemcinctus (Nine-banded armadillo).